A 172-amino-acid polypeptide reads, in one-letter code: NADH-ubiquinone oxidoreductase chain 6 (172 aa).

Transmembrane regions (helical) follow at residues 1-21 (MNNY…GLAL), 38-58 (VGCL…VFLI), 86-106 (WLIL…ICVL), and 147-167 (CATW…FIII).

The protein belongs to the complex I subunit 6 family. As to quaternary structure, core subunit of respiratory chain NADH dehydrogenase (Complex I) which is composed of 45 different subunits.

The protein localises to the mitochondrion inner membrane. The enzyme catalyses a ubiquinone + NADH + 5 H(+)(in) = a ubiquinol + NAD(+) + 4 H(+)(out). In terms of biological role, core subunit of the mitochondrial membrane respiratory chain NADH dehydrogenase (Complex I) which catalyzes electron transfer from NADH through the respiratory chain, using ubiquinone as an electron acceptor. Essential for the catalytic activity and assembly of complex I. This is NADH-ubiquinone oxidoreductase chain 6 (Mtnd6) from Mus musculus (Mouse).